A 633-amino-acid polypeptide reads, in one-letter code: Probable potassium transport system protein Kup 3 (633 aa).

The next 12 helical transmembrane spans lie at 24 to 44 (LVLA…LYAF), 61 to 81 (VLGI…LKYV), 114 to 134 (LVLG…TPAI), 148 to 168 (PALS…LFFV), 180 to 200 (FGPV…IHIF), 222 to 242 (IGSA…AEAL), 258 to 278 (WFSL…AFVL), 298 to 318 (IPMV…VISG), 348 to 368 (IFMP…VLFF), 377 to 397 (AYGI…FIVM), 405 to 425 (LTAA…FLAA), and 427 to 447 (IAKF…MALI).

The protein belongs to the HAK/KUP transporter (TC 2.A.72) family.

The protein localises to the cell inner membrane. It catalyses the reaction K(+)(in) + H(+)(in) = K(+)(out) + H(+)(out). Transport of potassium into the cell. Likely operates as a K(+):H(+) symporter. The sequence is that of Probable potassium transport system protein Kup 3 from Rhizobium johnstonii (strain DSM 114642 / LMG 32736 / 3841) (Rhizobium leguminosarum bv. viciae).